A 406-amino-acid chain; its full sequence is Arginine decarboxylase (406 aa).

Residue lysine 8 is modified to N6-(pyridoxal phosphate)lysine. Substrate is bound at residue 192–202; sequence VDFGGGLGIDY.

This sequence belongs to the Orn/Lys/Arg decarboxylase class-II family. SpeA subfamily. Requires pyridoxal 5'-phosphate as cofactor. The cofactor is Mg(2+).

The catalysed reaction is L-arginine + H(+) = agmatine + CO2. It functions in the pathway amine and polyamine biosynthesis; agmatine biosynthesis; agmatine from L-arginine: step 1/1. This is Arginine decarboxylase (SPE2) from Theobroma cacao (Cacao).